A 432-amino-acid polypeptide reads, in one-letter code: Adenylosuccinate synthetase (432 aa).

GTP is bound by residues 13 to 19 (GDEGKGK) and 41 to 43 (GHT). Aspartate 14 serves as the catalytic Proton acceptor. Mg(2+)-binding residues include aspartate 14 and glycine 41. IMP-binding positions include 14 to 17 (DEGK), 39 to 42 (NAGH), threonine 130, arginine 144, glutamine 225, threonine 240, and arginine 304. The Proton donor role is filled by histidine 42. 300–306 (ATTGRRR) is a binding site for substrate. Residues arginine 306, 332–334 (KLD), and 415–417 (STG) each bind GTP.

The protein belongs to the adenylosuccinate synthetase family. Homodimer. Mg(2+) is required as a cofactor.

It is found in the cytoplasm. It carries out the reaction IMP + L-aspartate + GTP = N(6)-(1,2-dicarboxyethyl)-AMP + GDP + phosphate + 2 H(+). Its pathway is purine metabolism; AMP biosynthesis via de novo pathway; AMP from IMP: step 1/2. Its function is as follows. Plays an important role in the de novo pathway of purine nucleotide biosynthesis. Catalyzes the first committed step in the biosynthesis of AMP from IMP. This Salmonella paratyphi A (strain AKU_12601) protein is Adenylosuccinate synthetase.